We begin with the raw amino-acid sequence, 186 residues long: Ribosome-recycling factor (186 aa).

This sequence belongs to the RRF family.

The protein resides in the cytoplasm. Its function is as follows. Responsible for the release of ribosomes from messenger RNA at the termination of protein biosynthesis. May increase the efficiency of translation by recycling ribosomes from one round of translation to another. In Rhodopseudomonas palustris (strain ATCC BAA-98 / CGA009), this protein is Ribosome-recycling factor.